A 138-amino-acid polypeptide reads, in one-letter code: Ribulose bisphosphate carboxylase small subunit (138 aa).

Belongs to the RuBisCO small chain family. Heterohexadecamer of 8 large and 8 small subunits.

The protein localises to the plastid. Its subcellular location is the chloroplast. In terms of biological role, ruBisCO catalyzes two reactions: the carboxylation of D-ribulose 1,5-bisphosphate, the primary event in carbon dioxide fixation, as well as the oxidative fragmentation of the pentose substrate in the photorespiration process. Both reactions occur simultaneously and in competition at the same active site. Although the small subunit is not catalytic it is essential for maximal activity. The protein is Ribulose bisphosphate carboxylase small subunit of Pyropia dentata (Red alga).